Reading from the N-terminus, the 366-residue chain is Transcription factor bHLH74 (366 aa).

Residues 1-11 show a composition bias toward gly residues; sequence MGGESNEGGEM. 2 disordered regions span residues 1–20 and 123–201; these read MGGE…DDES and GESS…APKE. 2 stretches are compositionally biased toward basic and acidic residues: residues 123–134 and 159–170; these read GESSHEDHHQVS and KAVEEFQEDPQR. One can recognise a bHLH domain in the interval 212 to 262; that stretch reads QATNSHSLAERVRREKISERMRLLQELVPGCNKITGKAVMLDEIINYVQSL.

In terms of assembly, homodimer. Interacts with IBH1. Binds reversibly to CRY2 after blue light illumination. Expressed constitutively in roots, leaves, stems, and flowers.

The protein resides in the nucleus. Functionally, transcriptional activator involved in cell elongation. Regulates the expression of a subset of genes involved in cell expansion by binding to the G-box motif. Binds to chromatin DNA of the FT gene and promotes its expression, and thus triggers flowering in response to blue light. The chain is Transcription factor bHLH74 (BHLH74) from Arabidopsis thaliana (Mouse-ear cress).